We begin with the raw amino-acid sequence, 248 residues long: UPF0736 protein Bcer98_0893 (248 aa).

This sequence belongs to the UPF0736 family.

The protein is UPF0736 protein Bcer98_0893 of Bacillus cytotoxicus (strain DSM 22905 / CIP 110041 / 391-98 / NVH 391-98).